Consider the following 395-residue polypeptide: 1-deoxy-D-xylulose 5-phosphate reductoisomerase (395 aa).

NADPH is bound by residues threonine 15, glycine 16, serine 17, isoleucine 18, glycine 41, asparagine 43, and asparagine 126. Position 127 (lysine 127) interacts with 1-deoxy-D-xylulose 5-phosphate. Glutamate 128 is a binding site for NADPH. Aspartate 152 provides a ligand contact to Mn(2+). Residues serine 153, glutamate 154, serine 178, and histidine 201 each contribute to the 1-deoxy-D-xylulose 5-phosphate site. Glutamate 154 serves as a coordination point for Mn(2+). Glycine 207 lines the NADPH pocket. 4 residues coordinate 1-deoxy-D-xylulose 5-phosphate: serine 214, asparagine 219, lysine 220, and glutamate 223. Glutamate 223 lines the Mn(2+) pocket.

It belongs to the DXR family. Mg(2+) is required as a cofactor. It depends on Mn(2+) as a cofactor.

The catalysed reaction is 2-C-methyl-D-erythritol 4-phosphate + NADP(+) = 1-deoxy-D-xylulose 5-phosphate + NADPH + H(+). It participates in isoprenoid biosynthesis; isopentenyl diphosphate biosynthesis via DXP pathway; isopentenyl diphosphate from 1-deoxy-D-xylulose 5-phosphate: step 1/6. Its function is as follows. Catalyzes the NADPH-dependent rearrangement and reduction of 1-deoxy-D-xylulose-5-phosphate (DXP) to 2-C-methyl-D-erythritol 4-phosphate (MEP). This chain is 1-deoxy-D-xylulose 5-phosphate reductoisomerase, found in Ruegeria pomeroyi (strain ATCC 700808 / DSM 15171 / DSS-3) (Silicibacter pomeroyi).